A 576-amino-acid chain; its full sequence is Gamma-aminobutyric acid receptor subunit beta (576 aa).

The N-terminal stretch at 1-29 (MSDSMLYQTLQTCLPKSRLITLWLAFTLA) is a signal peptide. Topologically, residues 30–268 (MLIQEPRRHA…IQFVRSMGYY (239 aa)) are extracellular. N-linked (GlcNAc...) asparagine glycosylation occurs at Asn-56. A disulfide bridge links Cys-183 with Cys-197. An N-linked (GlcNAc...) asparagine glycan is attached at Asn-251. 3 consecutive transmembrane segments (helical) span residues 269–289 (LIQI…SFWL), 298–320 (VALG…AALP), and 330–350 (VYLG…ATVG). Over 351 to 540 (YMAKRIQMRK…TPSDIDKYSR (190 aa)) the chain is Cytoplasmic. Disordered stretches follow at residues 372 to 418 (QKKQ…QTVS) and 452 to 507 (HDPK…GDAE). A compositionally biased stretch (basic residues) spans 398–412 (HGHGHGHHSHGHPHV). Residues 475–490 (PVGPHGPGPQGPPGGP) show a composition bias toward pro residues. Residues 491–501 (PAGGGGGGAPP) are compositionally biased toward gly residues. A helical transmembrane segment spans residues 541–561 (IVFPVCFVCFNLMYWIIYLHV).

This sequence belongs to the ligand-gated ion channel (TC 1.A.9) family. Gamma-aminobutyric acid receptor (TC 1.A.9.5) subfamily. As to quaternary structure, homomultimer.

The protein localises to the postsynaptic cell membrane. It is found in the cell membrane. In terms of biological role, GABA, an inhibitory neurotransmitter, mediates neuronal inhibition by binding to the GABA receptor and opening an integral chloride channel. This Musca domestica (House fly) protein is Gamma-aminobutyric acid receptor subunit beta.